The chain runs to 333 residues: Testin-2 (333 aa).

The first 17 residues, 1–17 (MIAVLFLAILCLEIDST), serve as a signal peptide directing secretion. Intrachain disulfides connect C135-C178, C169-C211, and C269-C322. A glycan (N-linked (GlcNAc...) asparagine) is linked at N173. Active-site residues include H276 and N300.

It belongs to the peptidase C1 family. As to expression, expressed in testis and ovary. Low level in spleen, epididymis, kidney, and uterus. Expressed in primary cultures of Sertoli cells.

The protein localises to the secreted. The polypeptide is Testin-2 (Mus musculus (Mouse)).